The chain runs to 106 residues: Small ribosomal subunit protein bS18 (106 aa).

The disordered stretch occupies residues M1–R41.

The protein belongs to the bacterial ribosomal protein bS18 family. In terms of assembly, part of the 30S ribosomal subunit. Forms a tight heterodimer with protein bS6.

Its function is as follows. Binds as a heterodimer with protein bS6 to the central domain of the 16S rRNA, where it helps stabilize the platform of the 30S subunit. In Oenococcus oeni (strain ATCC BAA-331 / PSU-1), this protein is Small ribosomal subunit protein bS18.